Reading from the N-terminus, the 138-residue chain is UPF0310 protein MAV_1800 (138 aa).

The protein belongs to the UPF0310 family.

The polypeptide is UPF0310 protein MAV_1800 (Mycobacterium avium (strain 104)).